We begin with the raw amino-acid sequence, 469 residues long: MGFSRSLNRTVGVFVFFILDIVDFLLCFTYKTLDFFFESEWKPCYCCPPPEAKPISAGGNRGGKMIVSERSGDYSKVVSLTRTKIYLDEISDTLYSRPSLLTKLTKLVKCFKKDVVKCCDESKKRSPSTKKTLLTVNSTVVEKLQRTPRWSDCHCTFCTSWLSSSNQSLFVNVQQPTDNKAQENVVFIHGFLSSSTFWTETLFPNFSDSAKSNYRFLAVDLLGYGKSPKPNDSLYTLKEHLEMIERSVISQFRLKTFHLVAHSLGCILALALAVKHPGAIKSLTLLAPPYYSVPKGVQGTQYVMRRLAPKEVWPPMAFGASVASWYEHISRTVSLVLCKNHHLLEFLTRLLTRNRMRTYLIEGFLCHTHNASWHTLHNIIFGSGSKVEAYLDHVRDNVDCEVAVFHGGRDELIPVECSYGVKRKVPRARIHVVPDKDHITIVVGRQKEFARELELIWRRSTTPQLHSIN.

A signal peptide spans 1–45 (MGFSRSLNRTVGVFVFFILDIVDFLLCFTYKTLDFFFESEWKPCY). C46 carries the N-palmitoyl cysteine lipid modification. In terms of domain architecture, AB hydrolase-1 spans 185-439 (VVFIHGFLSS…IHVVPDKDHI (255 aa)). Residue H189 is part of the active site. Residue S263 is the Nucleophile of the active site. Catalysis depends on charge relay system residues D410 and H438.

Expressed exclusively in protodermal and epidermal cells of all organs, especially on adaxial sides.

It is found in the cell membrane. It localises to the secreted. The protein localises to the cell wall. Controls cuticle development and morphogenesis, by promoting cutin and suberin monomers loading. Involved in the regulation of abscissic acid (ABA) biosynthesis in response to osmotic stress. Plays an important role in osmotic stress and drought resistance. Required to ensure a reduced permeability of aerial tissue, thus preventing transpiration. Regulates lateral root hair development. Its function is as follows. Required for infection by the pathogenic necrotrophic fungus Botrytis cinerea, probably by regulating structural traits of the cuticle. The sequence is that of Probable lysophospholipase BODYGUARD 1 from Arabidopsis thaliana (Mouse-ear cress).